The chain runs to 1025 residues: Glycine dehydrogenase (decarboxylating), mitochondrial (1025 aa).

Residues 1-35 (MQLCARAWGLRLGRGAGGGHRLARGTGLSWAQRSR) constitute a mitochondrion transit peptide. The interval 16–51 (AGGGHRLARGTGLSWAQRSRDSSGGGGGGGGGDRGA) is disordered. Gly residues predominate over residues 38–50 (SGGGGGGGGGDRG). An N6-acetyllysine mark is found at Lys452, Lys519, Lys653, and Lys669. Residue Lys759 is modified to N6-(pyridoxal phosphate)lysine.

It belongs to the GcvP family. As to quaternary structure, interacts with GCSH. Homodimer. The glycine cleavage system is composed of four proteins: P (GLDC), T (GCST), L (DLD) and H (GCSH). It depends on pyridoxal 5'-phosphate as a cofactor.

It is found in the mitochondrion. It catalyses the reaction N(6)-[(R)-lipoyl]-L-lysyl-[glycine-cleavage complex H protein] + glycine + H(+) = N(6)-[(R)-S(8)-aminomethyldihydrolipoyl]-L-lysyl-[glycine-cleavage complex H protein] + CO2. With respect to regulation, stimulated by lipoic acid. Inhibited in presence of methylamine. The glycine cleavage system catalyzes the degradation of glycine. The P protein (GLDC) binds the alpha-amino group of glycine through its pyridoxal phosphate cofactor; CO(2) is released and the remaining methylamine moiety is then transferred to the lipoamide cofactor of the H protein (GCSH). This is Glycine dehydrogenase (decarboxylating), mitochondrial from Mus musculus (Mouse).